The primary structure comprises 315 residues: Methionyl-tRNA formyltransferase (315 aa).

A (6S)-5,6,7,8-tetrahydrofolate-binding site is contributed by 110–113 (SLLP).

Belongs to the Fmt family.

The enzyme catalyses L-methionyl-tRNA(fMet) + (6R)-10-formyltetrahydrofolate = N-formyl-L-methionyl-tRNA(fMet) + (6S)-5,6,7,8-tetrahydrofolate + H(+). Functionally, attaches a formyl group to the free amino group of methionyl-tRNA(fMet). The formyl group appears to play a dual role in the initiator identity of N-formylmethionyl-tRNA by promoting its recognition by IF2 and preventing the misappropriation of this tRNA by the elongation apparatus. The chain is Methionyl-tRNA formyltransferase from Lactobacillus delbrueckii subsp. bulgaricus (strain ATCC BAA-365 / Lb-18).